The chain runs to 610 residues: ATP-dependent zinc metalloprotease FtsH (610 aa).

Over 1–3 the chain is Cytoplasmic; it reads MAK. A helical transmembrane segment spans residues 4–24; that stretch reads NLMLWLVIAVVLMSIFQNFSA. Residues 25–97 lie on the Extracellular side of the membrane; that stretch reads NNINNRKIDY…IIGAAPEEQS (73 aa). Residues 98–118 traverse the membrane as a helical segment; sequence FFTAIFISWFPMLLLIGVWVF. The Cytoplasmic segment spans residues 119-610; sequence FMRQMQVGGG…SNICTDDDNN (492 aa). Residue 192-199 coordinates ATP; the sequence is GPPGTGKT. Residue H414 coordinates Zn(2+). E415 is a catalytic residue. 2 residues coordinate Zn(2+): H418 and D492.

This sequence in the central section; belongs to the AAA ATPase family. In the C-terminal section; belongs to the peptidase M41 family. As to quaternary structure, homohexamer. Zn(2+) is required as a cofactor.

It localises to the cell membrane. Functionally, acts as a processive, ATP-dependent zinc metallopeptidase for both cytoplasmic and membrane proteins. Plays a role in the quality control of integral membrane proteins. The protein is ATP-dependent zinc metalloprotease FtsH of Buchnera aphidicola subsp. Baizongia pistaciae (strain Bp).